The primary structure comprises 314 residues: Beta-lactamase (314 aa).

The segment at residues 1–39 (MHPSTSRPSRRTLLTATAGAALAAATLVPGTAHASSGGR) is a signal peptide (tat-type signal). Residues 31–50 (TAHASSGGRGHGSGSVSDAE) are disordered. Serine 89 (acyl-ester intermediate) is an active-site residue. A substrate-binding site is contributed by 259–261 (KTG).

The protein belongs to the class-A beta-lactamase family. In terms of processing, predicted to be exported by the Tat system. The position of the signal peptide cleavage has been experimentally proven.

It carries out the reaction a beta-lactam + H2O = a substituted beta-amino acid. In Streptomyces albus G, this protein is Beta-lactamase.